Consider the following 214-residue polypeptide: Thiamine-phosphate synthase (214 aa).

4-amino-2-methyl-5-(diphosphooxymethyl)pyrimidine-binding positions include 37–41 (QYREK) and Asn-73. Residues Asp-74 and Asp-93 each contribute to the Mg(2+) site. Ser-112 contacts 4-amino-2-methyl-5-(diphosphooxymethyl)pyrimidine. 139 to 141 (TIS) contacts 2-[(2R,5Z)-2-carboxy-4-methylthiazol-5(2H)-ylidene]ethyl phosphate. Lys-142 provides a ligand contact to 4-amino-2-methyl-5-(diphosphooxymethyl)pyrimidine. Residues Gly-171 and 191-192 (IS) contribute to the 2-[(2R,5Z)-2-carboxy-4-methylthiazol-5(2H)-ylidene]ethyl phosphate site.

This sequence belongs to the thiamine-phosphate synthase family. Mg(2+) serves as cofactor.

It carries out the reaction 2-[(2R,5Z)-2-carboxy-4-methylthiazol-5(2H)-ylidene]ethyl phosphate + 4-amino-2-methyl-5-(diphosphooxymethyl)pyrimidine + 2 H(+) = thiamine phosphate + CO2 + diphosphate. It catalyses the reaction 2-(2-carboxy-4-methylthiazol-5-yl)ethyl phosphate + 4-amino-2-methyl-5-(diphosphooxymethyl)pyrimidine + 2 H(+) = thiamine phosphate + CO2 + diphosphate. The catalysed reaction is 4-methyl-5-(2-phosphooxyethyl)-thiazole + 4-amino-2-methyl-5-(diphosphooxymethyl)pyrimidine + H(+) = thiamine phosphate + diphosphate. It functions in the pathway cofactor biosynthesis; thiamine diphosphate biosynthesis; thiamine phosphate from 4-amino-2-methyl-5-diphosphomethylpyrimidine and 4-methyl-5-(2-phosphoethyl)-thiazole: step 1/1. In terms of biological role, condenses 4-methyl-5-(beta-hydroxyethyl)thiazole monophosphate (THZ-P) and 2-methyl-4-amino-5-hydroxymethyl pyrimidine pyrophosphate (HMP-PP) to form thiamine monophosphate (TMP). The protein is Thiamine-phosphate synthase of Listeria innocua serovar 6a (strain ATCC BAA-680 / CLIP 11262).